Here is a 684-residue protein sequence, read N- to C-terminus: DNA ligase (684 aa).

NAD(+) is bound by residues 46-50 (DYVYD), 100-101 (SL), and glutamate 130. The active-site N6-AMP-lysine intermediate is the lysine 132. NAD(+) is bound by residues arginine 153, glutamate 187, lysine 303, and lysine 327. Residues cysteine 421, cysteine 424, cysteine 439, and cysteine 444 each contribute to the Zn(2+) site. One can recognise a BRCT domain in the interval 604–684 (DEKNYFFNKR…DFINLSNAKK (81 aa)).

This sequence belongs to the NAD-dependent DNA ligase family. LigA subfamily. Mg(2+) is required as a cofactor. Requires Mn(2+) as cofactor.

It carries out the reaction NAD(+) + (deoxyribonucleotide)n-3'-hydroxyl + 5'-phospho-(deoxyribonucleotide)m = (deoxyribonucleotide)n+m + AMP + beta-nicotinamide D-nucleotide.. DNA ligase that catalyzes the formation of phosphodiester linkages between 5'-phosphoryl and 3'-hydroxyl groups in double-stranded DNA using NAD as a coenzyme and as the energy source for the reaction. It is essential for DNA replication and repair of damaged DNA. The chain is DNA ligase from Oenococcus oeni (strain ATCC BAA-331 / PSU-1).